Here is a 683-residue protein sequence, read N- to C-terminus: MSEPRKILVTSALPYANGSIHLGHMLEYIQTDMWVRFQKHRGNQCIYVCADDAHGSAIMLRAEKEGITPEQLIANVQAEHSADFAEFLVDFDNFHSTHSDENRELSSQIYLRLKEAGHIATRSITQYFDPEKKMFLADRFIKGTCPKCGTEDQYGDNCEKCGATYAPTDLKNPKSAISGATPVLKDSQHFFFKLPDFQQMLQTWTRSGTLQDAVANKIAEWLDAGLQQWDISRDAPYFGFEIPGEPGKYFYVWLDAPIGYMASFKNLCDRTPELDFDAFWAKDSTAELYHFIGKDIVNFHALFWPAMLEGSGYRKPTGIAVHGYLTVNGQKMSKSRGTFIKARTYLDHLSPEYLRYYYASKLGRGVDDLDLNLEDFVQKVNSDLVGKVVNIASRCAGFIHKGNAGVLVAENAAPELTDAFLAAAPSIADAYEARDFARAMREIMGLADRANAWIADKAPWSLNKQEGKQAEVQAICATGVNLFRQLVIFLKPVLPLLAADAEAFLNVAPLTWNDHATLLSNHQLNEFKPLMTRIDPVKVQAMTDASKEDLVASQTDTGESAPAGNGELAKDPISAEIEFDAFAAVDLRVALIVKAEAVEGADKLLRLTLDLGGEQRNVFSGIKSAYPDPSKLDGRLTMMIANLKPRKMKFGISEGMVMAAGPGGEEIYLLSPDSGAKPGQRIK.

Positions 14-24 match the 'HIGH' region motif; the sequence is PYANGSIHLGH. Zn(2+)-binding residues include Cys145, Cys148, Cys158, and Cys161. The 'KMSKS' region signature appears at 331–335; the sequence is KMSKS. Residue Lys334 participates in ATP binding. A tRNA-binding domain is found at 581–683; that stretch reads AFAAVDLRVA…SGAKPGQRIK (103 aa).

This sequence belongs to the class-I aminoacyl-tRNA synthetase family. MetG type 1 subfamily. Homodimer. Requires Zn(2+) as cofactor.

Its subcellular location is the cytoplasm. It carries out the reaction tRNA(Met) + L-methionine + ATP = L-methionyl-tRNA(Met) + AMP + diphosphate. Functionally, is required not only for elongation of protein synthesis but also for the initiation of all mRNA translation through initiator tRNA(fMet) aminoacylation. This is Methionine--tRNA ligase from Pseudomonas fluorescens (strain SBW25).